Here is a 149-residue protein sequence, read N- to C-terminus: Sperm surface protein Sp17 (149 aa).

Basic and acidic residues predominate over residues 83-96 (CEQELAKSSGREET). Positions 83–114 (CEQELAKSSGREETPVTPFEESTEEEREQEEA) are disordered. The span at 103 to 113 (ESTEEEREQEE) shows a compositional bias: acidic residues. Residues 112–141 (EEAAALKIQSLFRGHVAREEVKKMKSDKNE) enclose the IQ domain.

As to quaternary structure, homodimer. May interact with ROPN1. Testis- and sperm-specific.

Its subcellular location is the membrane. Functionally, sperm surface zona pellucida binding protein. Helps to bind spermatozoa to the zona pellucida with high affinity. Might function in binding zona pellucida and carbohydrates. The protein is Sperm surface protein Sp17 (Spa17) of Mus musculus (Mouse).